We begin with the raw amino-acid sequence, 61 residues long: Large ribosomal subunit protein bL32 (61 aa).

Belongs to the bacterial ribosomal protein bL32 family.

The protein is Large ribosomal subunit protein bL32 of Hyphomonas neptunium (strain ATCC 15444).